The sequence spans 1189 residues: Magnesium-chelatase subunit H (1189 aa).

This sequence belongs to the Mg-chelatase subunit H family.

The enzyme catalyses protoporphyrin IX + Mg(2+) + ATP + H2O = Mg-protoporphyrin IX + ADP + phosphate + 3 H(+). It participates in porphyrin-containing compound metabolism; bacteriochlorophyll biosynthesis (light-independent). Its function is as follows. Involved in bacteriochlorophyll pigment biosynthesis; introduces a magnesium ion into protoporphyrin IX to yield Mg-protoroporphyrin IX. In Rhodobacter capsulatus (strain ATCC BAA-309 / NBRC 16581 / SB1003), this protein is Magnesium-chelatase subunit H (bchH).